The sequence spans 912 residues: Ubiquitin carboxyl-terminal hydrolase 3 (912 aa).

The span at 1 to 11 (MNMQDANKEES) shows a compositional bias: basic and acidic residues. 4 disordered regions span residues 1-30 (MNMQDANKEESYSMYPKTSSPPPPTPTNMQ), 68-176 (IYHQ…SYSS), 241-384 (NSSV…TTAG), and 396-417 (GKSSSPLLSKQPQKKDKKYVPP). 3 stretches are compositionally biased toward low complexity: residues 82-95 (NNINGGSTTNNNNI), 102-140 (SNGITNNNGSSGNQGANSSGSGMSYNKSHTYHHNYSNNH), and 159-176 (TNSSNGNGSSATSPSYSS). Residues 249 to 259 (AHHHTKSHSIP) show a composition bias toward basic residues. Positions 260-310 (KHNEEVKTETHGEEEDAHDKKPHASKDAHELKKKTEVKKEDAKQDRNEKVI) are enriched in basic and acidic residues. Low complexity predominate over residues 335–355 (SKTSSPSPSPPAAKSWSAIAS). Composition is skewed to polar residues over residues 361–384 (RQASNKTVSGSMVTKTPISGTTAG) and 396–406 (GKSSSPLLSKQ). Residues 460–911 (RGIINRANIC…TAYILMYQKR (452 aa)) form the USP domain. Cysteine 469 serves as the catalytic Nucleophile. The active-site Proton acceptor is the histidine 861.

This sequence belongs to the peptidase C19 family. Heterotetramer with BRE5; contains two molecules of BRE5 and two molecules of UBP3. Forms a complex composed of CDC48, DOA1, deubiquitinase UBP3 and probably BRE5. Within the complex interacts directly with DOA1 and CDC48 in a BRE5-independent manner.

The catalysed reaction is Thiol-dependent hydrolysis of ester, thioester, amide, peptide and isopeptide bonds formed by the C-terminal Gly of ubiquitin (a 76-residue protein attached to proteins as an intracellular targeting signal).. Functionally, has an ATP-independent isopeptidase activity, cleaving at the C-terminus of the ubiquitin moiety in natural or engineered linear fusion proteins, irrespective of their size or the presence of an N-terminal extension to ubiquitin. Plays a role in regulation of silencing by interacting with SIR4. Also, in conjunction with BRE5, cleaves ubiquitin, leading to the subsequent mono-ubiquitination of SEC23. Required for ribophagy, a process which relocalizes ribosomal particles into the vacuole for degradation in response to starvation. The protein is Ubiquitin carboxyl-terminal hydrolase 3 (UBP3) of Saccharomyces cerevisiae (strain ATCC 204508 / S288c) (Baker's yeast).